A 182-amino-acid polypeptide reads, in one-letter code: Large ribosomal subunit protein uL5 (182 aa).

The protein belongs to the universal ribosomal protein uL5 family. As to quaternary structure, part of the 50S ribosomal subunit; part of the 5S rRNA/L5/L18/L25 subcomplex. Contacts the 5S rRNA and the P site tRNA. Forms a bridge to the 30S subunit in the 70S ribosome.

In terms of biological role, this is one of the proteins that bind and probably mediate the attachment of the 5S RNA into the large ribosomal subunit, where it forms part of the central protuberance. In the 70S ribosome it contacts protein S13 of the 30S subunit (bridge B1b), connecting the 2 subunits; this bridge is implicated in subunit movement. Contacts the P site tRNA; the 5S rRNA and some of its associated proteins might help stabilize positioning of ribosome-bound tRNAs. The protein is Large ribosomal subunit protein uL5 of Coxiella burnetii (strain CbuK_Q154) (Coxiella burnetii (strain Q154)).